A 183-amino-acid polypeptide reads, in one-letter code: Ribulose bisphosphate carboxylase small subunit, chloroplastic 3 (183 aa).

A chloroplast-targeting transit peptide spans 1-43; the sequence is MATTMLNRSVIVNKEVAKTPNFPRATKNNKGFASNAAVQKCRD.

It belongs to the RuBisCO small chain family. As to quaternary structure, heterohexadecamer of 8 large and 8 small subunits.

The protein localises to the plastid. Its subcellular location is the chloroplast. In terms of biological role, ruBisCO catalyzes two reactions: the carboxylation of D-ribulose 1,5-bisphosphate, the primary event in carbon dioxide fixation, as well as the oxidative fragmentation of the pentose substrate. Both reactions occur simultaneously and in competition at the same active site. Although the small subunit is not catalytic it is essential for maximal activity. In Acetabularia peniculus (Green alga), this protein is Ribulose bisphosphate carboxylase small subunit, chloroplastic 3.